The primary structure comprises 272 residues: Formamidopyrimidine-DNA glycosylase (272 aa).

Proline 2 functions as the Schiff-base intermediate with DNA in the catalytic mechanism. The Proton donor role is filled by glutamate 3. Lysine 58 serves as the catalytic Proton donor; for beta-elimination activity. Histidine 92, arginine 111, and arginine 153 together coordinate DNA. The FPG-type zinc-finger motif lies at 238–272 (NVYGRGGEPCPVCAKPLTEKPLSQRTTVYCTHCQN). The active-site Proton donor; for delta-elimination activity is arginine 262.

This sequence belongs to the FPG family. As to quaternary structure, monomer. Zn(2+) is required as a cofactor.

It carries out the reaction Hydrolysis of DNA containing ring-opened 7-methylguanine residues, releasing 2,6-diamino-4-hydroxy-5-(N-methyl)formamidopyrimidine.. The enzyme catalyses 2'-deoxyribonucleotide-(2'-deoxyribose 5'-phosphate)-2'-deoxyribonucleotide-DNA = a 3'-end 2'-deoxyribonucleotide-(2,3-dehydro-2,3-deoxyribose 5'-phosphate)-DNA + a 5'-end 5'-phospho-2'-deoxyribonucleoside-DNA + H(+). In terms of biological role, involved in base excision repair of DNA damaged by oxidation or by mutagenic agents. Acts as a DNA glycosylase that recognizes and removes damaged bases. Has a preference for oxidized purines, such as 7,8-dihydro-8-oxoguanine (8-oxoG). Has AP (apurinic/apyrimidinic) lyase activity and introduces nicks in the DNA strand. Cleaves the DNA backbone by beta-delta elimination to generate a single-strand break at the site of the removed base with both 3'- and 5'-phosphates. In Teredinibacter turnerae (strain ATCC 39867 / T7901), this protein is Formamidopyrimidine-DNA glycosylase.